Here is a 1952-residue protein sequence, read N- to C-terminus: MQDFGQWLPQSQTTADLYFSSIPIPSQFDTSIETQTRTSAVVSSEKESANSFVPHNGTGLVERISNDAGLTEVVGSSAGPTECIDLNKTPARKPKKKKHRPKVLKDDKPSKTPKSATPIPSTEKVEKPSGKRKYVRKKTSPGQPPAEQAASSHCRSELKSVKRSLDFGGEVLQESTQSGSQVPVAEICTGPKRQSIPSTIQRDSQSQLACHVVSSTSSIHTSASQMVNAHLFPPDNMPNGVLLDLNNSTSQLQNEHAKFVDSPARLFGSRIRQTSGKNSLLEIYAGMSDRNVPDLNSSISQTHSMSTDFAQYLLSSSQASVRETQMANQMLNGHRMPENPITPSHCIERAALKEHLNHVPHAKAAVMNGQMPHSYRLAQNPILPPNHIEGYQVMENLSELVTTNDYLTASPFSQTGAANRQHNIGDSMHIHALDPRRESNASSGSWISLGVNFNQQNNGWASAGAADAASSHAPYFSEPHKRMRTAYLNNYPNGVVGHFSTSSTDLSNNENENVASAINSNVFTLADAQRLIAREKSRASQRMISFRSSKNDMVNRSEMVHQHGRPAPHGSACRESIEVPDKQFGLMTEELTQLPSMPNNPQREKYIPQTGSCQLQSLEHDMVKGHNLAGELHKQVTSPQVVIQSNFCVTPPDVLGRRTSGEHLRTLIAPTHASTCKDTLKALSCQLESSRDIIRPPVNPIGPSSADVPRTDNHQVKVSEETVTAKLPEKRKVGRPRKELKPGEKPKPRGRPRKGKVVGGELASKDSHTNPLQNESTSCSYGPYAGEASVGRAVKANRVGENISGAMVSLLDSLDIVIQKIKVLDINKSEDPVTAEPHGALVPYNGEFGPIVPFEGKVKRKRSRAKVDLDPVTALMWKLLMGPDMSDCAEGMDKDKEKWLNEERKIFQGRVDSFIARMHLVQGDRRFSPWKGSVVDSVVGVFLTQNVSDHLSSSAFMALAAKFPVKPEASEKPANVMFHTISENGDCSGLFGNSVKLQGEILVQEASNTAASFITTEDKEGSNSVELLGSSFGDGVDGAAGVYSNIYENLPARLHATRRPVVQTGNAVEAEDGSLEGVVSSENSTISSQNSSDYLFHMSDHMFSSMLLNFTAEDIGSRNMPKATRTTYTELLRMQELKNKSNETIESSEYHGVPVSCSNNIQVLNGIQNIGSKHQPLHSSISYHQTGQVHLPDIVHASDLEQSVYTGLNRVLDSNVTQTSYYPSPHPGIACNNETQKADSLSNMLYGIDRSDKTTSLSEPTPRIDNCFQPLSSEKMSFAREQSSSENYLSRNEAEAAFVKQHGTSNVQGDNTVRTEQNGGENSQSGYSQQDDNVGFQTATTSNLYSSNLCQNQKANSEVLHGVSSNLIENSKDDKKTSPKVPVDGSKAKRPRVGAGKKKTYDWDMLRKEVLYSHGNKERSQNAKDSIDWETIRQAEVKEISDTIRERGMNNMLAERIKDFLNRLVRDHGSIDLEWLRYVDSDKAKDYLLSIRGLGLKSVECVRLLTLHHMAFPVDTNVGRICVRLGWVPLQPLPESLQLHLLEMYPMLENIQKYLWPRLCKLDQRTLYELHYQMITFGKVFCTKSKPNCNACPMRAECKHFASAFASARLALPGPEEKSLVTSGTPIAAETFHQTYISSRPVVSQLEWNSNTCHHGMNNRQPIIEEPASPEPEHETEEMKECAIEDSFVDDPEEIPTIKLNFEEFTQNLKSYMQANNIEIEDADMSKALVAITPEVASIPTPKLKNVSRLRTEHQVYELPDSHPLLEGFNQREPDDPCPYLLSIWTPGETAQSTDAPKSVCNSQENGELCASNTCFSCNSIREAQAQKVRGTLLIPCRTAMRGSFPLNGTYFQVNEVFADHDSSRNPIDVPRSWIWNLPRRTVYFGTSIPTIFKGLTTEEIQHCFWRGFVCVRGFDRTSRAPRPLYARLHFPASKITRNKKSAGSAPGRDDE.

4 disordered regions span residues glutamate 72–glutamate 157, isoleucine 693–serine 778, histidine 1302–valine 1334, and leucine 1367–lysine 1398. 2 stretches are compositionally biased toward basic residues: residues proline 90–lysine 102 and glycine 130–threonine 139. Basic and acidic residues-rich tracts occupy residues proline 709–glutamate 720 and leucine 727–lysine 747. Residues threonine 769 to serine 778 show a composition bias toward polar residues. The segment covering alanine 1388–lysine 1398 has biased composition (basic residues). 4 residues coordinate [4Fe-4S] cluster: cysteine 1582, cysteine 1589, cysteine 1592, and cysteine 1598.

This sequence belongs to the DNA glycosylase family. DEMETER subfamily. It depends on [4Fe-4S] cluster as a cofactor. In terms of tissue distribution, expressed in roots, leaf blades, leaf sheaths, apical and lateral shoot meristems, inflorescence meristems, lodicules, pollen grains, ovules and seeds. Expressed in vascular tissues of roots and leaves, pollen grains, pericarp, aleurone, and starchy endosperm.

It localises to the nucleus. Bifunctional DNA glycosylase/lyase, which excises 5-methylcytosine (5-meC) and 5-hydroxymethylcytosine (5-hmeC), leaving an apyrimidinic (AP) site that is subsequently incised by the lyase activity. DNA demethylase that is indispensable in both male and female gametophyte development. Involved in the regulation of DNA methylation in the promoters of RISBZ1/BZIP58 and DOF3/RPBF, two transcription factors that functions synergistically to positively regulate genes that are key players in the development of aleurone layers. Active DNA demethylation carried out by ROS1A in rice endosperms may restrict the number of aleurone cell layers. The chain is Protein ROS1A from Oryza sativa subsp. japonica (Rice).